Here is a 426-residue protein sequence, read N- to C-terminus: Glutamate-1-semialdehyde 2,1-aminomutase (426 aa).

At Lys-265 the chain carries N6-(pyridoxal phosphate)lysine.

This sequence belongs to the class-III pyridoxal-phosphate-dependent aminotransferase family. HemL subfamily. Homodimer. The cofactor is pyridoxal 5'-phosphate.

It is found in the cytoplasm. The enzyme catalyses (S)-4-amino-5-oxopentanoate = 5-aminolevulinate. It participates in porphyrin-containing compound metabolism; protoporphyrin-IX biosynthesis; 5-aminolevulinate from L-glutamyl-tRNA(Glu): step 2/2. This Sodalis glossinidius (strain morsitans) protein is Glutamate-1-semialdehyde 2,1-aminomutase.